Reading from the N-terminus, the 181-residue chain is Phospholipase A2 inhibitor gamma subunit B (181 aa).

Intrachain disulfides connect Cys-3–Cys-27, Cys-6–Cys-13, Cys-20–Cys-48, Cys-54–Cys-75, Cys-76–Cys-81, Cys-101–Cys-126, Cys-119–Cys-146, and Cys-152–Cys-172.

It belongs to the CNF-like-inhibitor family. As to quaternary structure, heterotrimer of 2 subunits A and 1 subunit B. In terms of tissue distribution, expressed by the liver.

The protein resides in the secreted. Strongly inhibits its own venom PLA2 and all other PLA2s tested including Elapid, Crotalid and Viperid venom PLA2s, as well as honeybee PLA2s. The protein is Phospholipase A2 inhibitor gamma subunit B of Laticauda semifasciata (Black-banded sea krait).